The chain runs to 292 residues: Ribosomal protein L11 methyltransferase (292 aa).

4 residues coordinate S-adenosyl-L-methionine: T144, G165, D187, and N229.

The protein belongs to the methyltransferase superfamily. PrmA family.

It is found in the cytoplasm. It catalyses the reaction L-lysyl-[protein] + 3 S-adenosyl-L-methionine = N(6),N(6),N(6)-trimethyl-L-lysyl-[protein] + 3 S-adenosyl-L-homocysteine + 3 H(+). In terms of biological role, methylates ribosomal protein L11. This chain is Ribosomal protein L11 methyltransferase, found in Pseudomonas fluorescens (strain ATCC BAA-477 / NRRL B-23932 / Pf-5).